The chain runs to 545 residues: T-complex protein 1 subunit alpha (545 aa).

Belongs to the TCP-1 chaperonin family. Heterooligomeric complex of about 850 to 900 kDa that forms two stacked rings, 12 to 16 nm in diameter.

Its subcellular location is the cytoplasm. Functionally, molecular chaperone; assists the folding of proteins upon ATP hydrolysis. Known to play a role, in vitro, in the folding of actin and tubulin. The sequence is that of T-complex protein 1 subunit alpha (TCP-1A) from Schistosoma mansoni (Blood fluke).